Reading from the N-terminus, the 92-residue chain is C-C motif chemokine 3 (92 aa).

The first 19 residues, 1 to 19 (MKVPGAALAVLLCTMSLCS), serve as a signal peptide directing secretion. 2 cysteine pairs are disulfide-bonded: Cys33–Cys57 and Cys34–Cys73.

The protein belongs to the intercrine beta (chemokine CC) family. As to quaternary structure, self-associates. Also heterodimer of MIP-1-alpha(4-69) and MIP-1-beta(3-69). Interacts with CCR1.

It localises to the secreted. Monokine with inflammatory and chemokinetic properties. Binds to CCR1, CCR4 and CCR5. One of the major HIV-suppressive factors produced by CD8+ T-cells. Recombinant MIP-1-alpha induces a dose-dependent inhibition of different strains of HIV-1, HIV-2, and simian immunodeficiency virus (SIV). In Canis lupus familiaris (Dog), this protein is C-C motif chemokine 3 (CCL3).